The chain runs to 326 residues: Diaminopimelate epimerase (326 aa).

N13 and N72 together coordinate substrate. Residue C81 is the Proton donor of the active site. Residues 82–83 (GN), N169, N205, and 223–224 (ER) each bind substrate. The active-site Proton acceptor is C232. A substrate-binding site is contributed by 233–234 (GT).

Belongs to the diaminopimelate epimerase family. In terms of assembly, homodimer.

It is found in the cytoplasm. The catalysed reaction is (2S,6S)-2,6-diaminopimelate = meso-2,6-diaminopimelate. It functions in the pathway amino-acid biosynthesis; L-lysine biosynthesis via DAP pathway; DL-2,6-diaminopimelate from LL-2,6-diaminopimelate: step 1/1. Functionally, catalyzes the stereoinversion of LL-2,6-diaminopimelate (L,L-DAP) to meso-diaminopimelate (meso-DAP), a precursor of L-lysine and an essential component of the bacterial peptidoglycan. This Enterococcus faecalis (strain ATCC 700802 / V583) protein is Diaminopimelate epimerase.